The sequence spans 54 residues: Ovomucoid (54 aa).

The region spanning 4–54 is the Kazal-like domain; that stretch reads VDCSDYPKPACLLEYMPLCGSDNKTYDNKCSFCNAVVDSNGTLSLSHFGKC. Cystine bridges form between Cys-6–Cys-36, Cys-14–Cys-33, and Cys-22–Cys-54. Asn-43 carries N-linked (GlcNAc...) asparagine glycosylation.

It is found in the secreted. In Opisthocomus hoazin (Hoatzin), this protein is Ovomucoid.